The primary structure comprises 245 residues: 1-(5-phosphoribosyl)-5-[(5-phosphoribosylamino)methylideneamino] imidazole-4-carboxamide isomerase (245 aa).

Residue aspartate 8 is the Proton acceptor of the active site. The active-site Proton donor is aspartate 129.

This sequence belongs to the HisA/HisF family.

Its subcellular location is the cytoplasm. The catalysed reaction is 1-(5-phospho-beta-D-ribosyl)-5-[(5-phospho-beta-D-ribosylamino)methylideneamino]imidazole-4-carboxamide = 5-[(5-phospho-1-deoxy-D-ribulos-1-ylimino)methylamino]-1-(5-phospho-beta-D-ribosyl)imidazole-4-carboxamide. The protein operates within amino-acid biosynthesis; L-histidine biosynthesis; L-histidine from 5-phospho-alpha-D-ribose 1-diphosphate: step 4/9. The protein is 1-(5-phosphoribosyl)-5-[(5-phosphoribosylamino)methylideneamino] imidazole-4-carboxamide isomerase of Pelobacter propionicus (strain DSM 2379 / NBRC 103807 / OttBd1).